We begin with the raw amino-acid sequence, 212 residues long: Ribosomal RNA small subunit methyltransferase G (212 aa).

Residues G80, L85, 131 to 132 (AE), and R146 each bind S-adenosyl-L-methionine.

The protein belongs to the methyltransferase superfamily. RNA methyltransferase RsmG family.

It is found in the cytoplasm. It carries out the reaction guanosine(527) in 16S rRNA + S-adenosyl-L-methionine = N(7)-methylguanosine(527) in 16S rRNA + S-adenosyl-L-homocysteine. Functionally, specifically methylates the N7 position of guanine in position 527 of 16S rRNA. The protein is Ribosomal RNA small subunit methyltransferase G of Xanthomonas euvesicatoria pv. vesicatoria (strain 85-10) (Xanthomonas campestris pv. vesicatoria).